The sequence spans 603 residues: NADPH-dependent diflavin oxidoreductase 1 (603 aa).

In terms of domain architecture, Flavodoxin-like spans 10-155; it reads VTILYGSETG…YYSEWETNLL (146 aa). FMN is bound by residues 16–21, 64–67, 102–111, and Glu-137; these read SETGNA, STTG, and IGDSSYPKFN. Positions 209–451 constitute an FAD-binding FR-type domain; it reads TNLLLGSVKA…HKSNLKFELP (243 aa). FAD-binding positions include Arg-359, 390 to 393, and 422 to 425; these read RLFS and GLCT. NADP(+) contacts are provided by residues Thr-465 and 521 to 522; that span reads SR. Residue Trp-603 participates in FAD binding.

The protein belongs to the NADPH-dependent diflavin oxidoreductase NDOR1 family. This sequence in the N-terminal section; belongs to the flavodoxin family. In the C-terminal section; belongs to the flavoprotein pyridine nucleotide cytochrome reductase family. As to quaternary structure, interacts with DRE2; as part of the cytosolic iron-sulfur (Fe-S) protein assembly (CIA) machinery. FAD is required as a cofactor. It depends on FMN as a cofactor.

The protein resides in the cytoplasm. The protein localises to the mitochondrion. It catalyses the reaction 2 oxidized [2Fe-2S]-[protein] + NADPH = 2 reduced [2Fe-2S]-[protein] + NADP(+) + H(+). In terms of biological role, NADPH-dependent reductase which is a central component of the cytosolic iron-sulfur (Fe-S) protein assembly (CIA) machinery. Transfers electrons from NADPH via its FAD and FMN prosthetic groups to the [2Fe-2S] cluster of DRE2, another key component of the CIA machinery. In turn, this reduced cluster provides electrons for assembly of cytosolic iron-sulfur cluster proteins. Positively controls H(2)O(2)-induced cell death. The chain is NADPH-dependent diflavin oxidoreductase 1 from Debaryomyces hansenii (strain ATCC 36239 / CBS 767 / BCRC 21394 / JCM 1990 / NBRC 0083 / IGC 2968) (Yeast).